The sequence spans 290 residues: tRNA (guanine-N(7)-)-methyltransferase (290 aa).

Basic and acidic residues-rich tracts occupy residues 1–12 and 20–43; these read MSDSLHTPEEPR and AHAH…DGPK. The disordered stretch occupies residues 1-49; that stretch reads MSDSLHTPEEPRPGPGEQLAHAHDGSLRHTRAKGEPRFPDGPKADPAGS. Glu104, Asp129, Asp156, and Asp179 together coordinate S-adenosyl-L-methionine. The active site involves Asp179. Substrate contacts are provided by residues Lys183, Asp215, and 252-255; that span reads TRFE.

Belongs to the class I-like SAM-binding methyltransferase superfamily. TrmB family.

It carries out the reaction guanosine(46) in tRNA + S-adenosyl-L-methionine = N(7)-methylguanosine(46) in tRNA + S-adenosyl-L-homocysteine. Its pathway is tRNA modification; N(7)-methylguanine-tRNA biosynthesis. Catalyzes the formation of N(7)-methylguanine at position 46 (m7G46) in tRNA. The chain is tRNA (guanine-N(7)-)-methyltransferase from Streptomyces avermitilis (strain ATCC 31267 / DSM 46492 / JCM 5070 / NBRC 14893 / NCIMB 12804 / NRRL 8165 / MA-4680).